The sequence spans 539 residues: NADH-quinone oxidoreductase subunit N 2 (539 aa).

Transmembrane regions (helical) follow at residues 11 to 31 (LIPE…DVLT), 52 to 72 (LMGL…FSWM), 106 to 126 (PLTH…VILT), 141 to 161 (LILF…LIMI), 193 to 213 (YIFG…LLGL), 248 to 268 (GVAI…VAIV), 296 to 316 (AGFF…SILG), 329 to 349 (WTSL…LAAL), 357 to 377 (MLAY…VGTQ), 385 to 405 (LMYL…LALV), 429 to 449 (LLLT…GFFV), 462 to 484 (AKWL…LRFL), and 500 to 520 (VGFG…GLGI).

This sequence belongs to the complex I subunit 2 family. NDH-1 is composed of 14 different subunits. Subunits NuoA, H, J, K, L, M, N constitute the membrane sector of the complex.

It is found in the cell membrane. The catalysed reaction is a quinone + NADH + 5 H(+)(in) = a quinol + NAD(+) + 4 H(+)(out). Functionally, NDH-1 shuttles electrons from NADH, via FMN and iron-sulfur (Fe-S) centers, to quinones in the respiratory chain. The immediate electron acceptor for the enzyme in this species is believed to be ubiquinone. Couples the redox reaction to proton translocation (for every two electrons transferred, four hydrogen ions are translocated across the cytoplasmic membrane), and thus conserves the redox energy in a proton gradient. The protein is NADH-quinone oxidoreductase subunit N 2 of Herpetosiphon aurantiacus (strain ATCC 23779 / DSM 785 / 114-95).